The following is a 424-amino-acid chain: Serine hydroxymethyltransferase (424 aa).

Residues Leu-113 and Gly-117–Leu-119 contribute to the (6S)-5,6,7,8-tetrahydrofolate site. Lys-222 carries the N6-(pyridoxal phosphate)lysine modification. Ser-361–Phe-363 serves as a coordination point for (6S)-5,6,7,8-tetrahydrofolate.

The protein belongs to the SHMT family. Homodimer. Requires pyridoxal 5'-phosphate as cofactor.

It is found in the cytoplasm. The enzyme catalyses (6R)-5,10-methylene-5,6,7,8-tetrahydrofolate + glycine + H2O = (6S)-5,6,7,8-tetrahydrofolate + L-serine. It functions in the pathway one-carbon metabolism; tetrahydrofolate interconversion. The protein operates within amino-acid biosynthesis; glycine biosynthesis; glycine from L-serine: step 1/1. In terms of biological role, catalyzes the reversible interconversion of serine and glycine with tetrahydrofolate (THF) serving as the one-carbon carrier. This reaction serves as the major source of one-carbon groups required for the biosynthesis of purines, thymidylate, methionine, and other important biomolecules. Also exhibits THF-independent aldolase activity toward beta-hydroxyamino acids, producing glycine and aldehydes, via a retro-aldol mechanism. The protein is Serine hydroxymethyltransferase of Flavobacterium johnsoniae (strain ATCC 17061 / DSM 2064 / JCM 8514 / BCRC 14874 / CCUG 350202 / NBRC 14942 / NCIMB 11054 / UW101) (Cytophaga johnsonae).